Reading from the N-terminus, the 540-residue chain is NADH-ubiquinone oxidoreductase chain 4 (540 aa).

14 helical membrane passes run 2–22 (TIIA…GVIL), 35–55 (IFIL…LIGC), 89–109 (ISAI…LISI), 118–138 (QKFQ…FAAT), 140–160 (LVQL…MIGV), 172–192 (FQIL…IGIL), 218–238 (LIFI…PLHL), 248–268 (PTAG…YGYI), 282–302 (YFPI…IATL), 310–330 (IVAY…FSGV), 338–358 (IILM…IGVI), 376–396 (VMPI…AFPI), 415–435 (IIIA…SFWL), and 501–521 (VNIF…IIGM).

It belongs to the complex I subunit 4 family.

It is found in the mitochondrion membrane. The enzyme catalyses a ubiquinone + NADH + 5 H(+)(in) = a ubiquinol + NAD(+) + 4 H(+)(out). In terms of biological role, core subunit of the mitochondrial membrane respiratory chain NADH dehydrogenase (Complex I) that is believed to belong to the minimal assembly required for catalysis. Complex I functions in the transfer of electrons from NADH to the respiratory chain. The immediate electron acceptor for the enzyme is believed to be ubiquinone. This is NADH-ubiquinone oxidoreductase chain 4 (nad4) from Dictyostelium discoideum (Social amoeba).